A 179-amino-acid chain; its full sequence is Inner membrane-spanning protein YciB (179 aa).

The next 5 helical transmembrane spans lie at 22 to 42, 50 to 70, 76 to 96, 121 to 141, and 149 to 169; these read IYVA…FTWF, MTLI…VFHN, WKVT…QLVL, LAWA…AFWL, and FKVF…GVYI.

This sequence belongs to the YciB family.

It is found in the cell inner membrane. In terms of biological role, plays a role in cell envelope biogenesis, maintenance of cell envelope integrity and membrane homeostasis. The chain is Inner membrane-spanning protein YciB from Serratia proteamaculans (strain 568).